The chain runs to 452 residues: MYQRQVSFDKPTRVEDSAYIVEGVDIKEARNTCLLFSPKDSSLSSGALANILAIFKKHDINLVHIESRSSLRVPGYEFFVEADGKSGALGKAIEDVKEQCSYFNIISRDYKDNATAVPWFPRRIRDLDRFANQILSYGSELDADHPGFTDPEYRKRRKYFADIAYNYKHGEPLPHVDYTKEEIETWGIIFRNLTKLYKTHACREYNHVFPLLVDNCGFREDNIPQLEDVSNFLRDCTGFTLRPVAGLLSSRDFLAGLAFRVFHSTQYIRHPSKPMYTPEPDVCHELMGHVPLFADPAFAQFSQEIGLASLGAPDDYIEKLSTIFWFTVEYGVCRQEGELKAYGAGLLSSYGELEYCLTDKPQLKDFEPEVTGVTKYPITQFQPLYYVADSFETAKEKTIKFANSIPRPFGVRYNAYTQSVEVLDSKPQISNLMDNINSEFQILQNAVAKLRV.

One can recognise an ACT domain in the interval Phe-36–Ser-107. Ser-272 carries the post-translational modification Phosphoserine; by CaMK2. Fe cation contacts are provided by His-284, His-289, and Glu-329.

The protein belongs to the biopterin-dependent aromatic amino acid hydroxylase family. Fe(2+) is required as a cofactor. As to expression, phenylalanine hydrolase activity is found in yolk granules of embryos, and female abdomen and fat body tissues. Tryptophan hydroxylase is expressed in serotonergic neurons. Both enzymes are present in cuticular tissues.

It carries out the reaction (6R)-L-erythro-5,6,7,8-tetrahydrobiopterin + L-phenylalanine + O2 = (4aS,6R)-4a-hydroxy-L-erythro-5,6,7,8-tetrahydrobiopterin + L-tyrosine. It catalyses the reaction (6R)-L-erythro-5,6,7,8-tetrahydrobiopterin + L-tryptophan + O2 = 5-hydroxy-L-tryptophan + (4aS,6R)-4a-hydroxy-L-erythro-5,6,7,8-tetrahydrobiopterin. The protein operates within amino-acid degradation; L-phenylalanine degradation; acetoacetate and fumarate from L-phenylalanine: step 1/6. Its activity is regulated as follows. N-terminal region of PAH is thought to contain allosteric binding sites for phenylalanine and to constitute an 'inhibitory' domain that regulates the activity of a catalytic domain in the C-terminal portion of the molecule. The chain is Protein henna (Hn) from Drosophila melanogaster (Fruit fly).